The primary structure comprises 305 residues: Glycerol-3-phosphate dehydrogenase [NAD(P)+] (305 aa).

NADPH contacts are provided by Phe10, Arg29, and Lys87. 3 residues coordinate sn-glycerol 3-phosphate: Lys87, Gly115, and Ser117. Ala119 contributes to the NADPH binding site. Sn-glycerol 3-phosphate-binding residues include Lys170, Asp223, Ser233, Arg234, and Asn235. Lys170 (proton acceptor) is an active-site residue. Position 234 (Arg234) interacts with NADPH. Glu255 serves as a coordination point for NADPH.

It belongs to the NAD-dependent glycerol-3-phosphate dehydrogenase family.

It is found in the cytoplasm. The enzyme catalyses sn-glycerol 3-phosphate + NAD(+) = dihydroxyacetone phosphate + NADH + H(+). The catalysed reaction is sn-glycerol 3-phosphate + NADP(+) = dihydroxyacetone phosphate + NADPH + H(+). It functions in the pathway membrane lipid metabolism; glycerophospholipid metabolism. In terms of biological role, catalyzes the reduction of the glycolytic intermediate dihydroxyacetone phosphate (DHAP) to sn-glycerol 3-phosphate (G3P), the key precursor for phospholipid synthesis. This is Glycerol-3-phosphate dehydrogenase [NAD(P)+] from Cereibacter sphaeroides (strain ATCC 17023 / DSM 158 / JCM 6121 / CCUG 31486 / LMG 2827 / NBRC 12203 / NCIMB 8253 / ATH 2.4.1.) (Rhodobacter sphaeroides).